A 200-amino-acid chain; its full sequence is Glutathione S-transferase 1-1 (200 aa).

The GST N-terminal domain maps to 1 to 73 (GSSPCRSVIM…YLVEKYGKTD (73 aa)). Glutathione contacts are provided by residues serine 2, 43-45 (HTI), and 57-59 (ESR). The 122-residue stretch at 79 to 200 (CPKKRAVINQ…AGCLEFKKYF (122 aa)) folds into the GST C-terminal domain.

The protein belongs to the GST superfamily. Theta family. As to quaternary structure, homodimer.

It catalyses the reaction RX + glutathione = an S-substituted glutathione + a halide anion + H(+). The catalysed reaction is 1,1,1-trichloro-2,2-bis(4-chlorophenyl)ethane = 1,1-dichloro-2,2-bis(4-chlorophenyl)ethylene + chloride + H(+). Conjugation of reduced glutathione to a wide number of exogenous and endogenous hydrophobic electrophiles. Has DDT dehydrochlorinase activity. This is Glutathione S-transferase 1-1 (GstD1) from Drosophila teissieri (Fruit fly).